The primary structure comprises 235 residues: MVVEETIKATSTEDLSNTIANQNPRGRGGDEDEELEEGEIVGDDDLDSSNLSAAIVHQPHPLEHSWTFWFDNPSAKSKQATWGASIRPIYTFSTVEEFWSVYNNIHHPSKLALRADLYCFKHKIEPKWEDPVCANGGKWTVNFSRGKSDNGWLYTLLAMIGEQFDCGDEICGAVVNVRSGQDKISIWTKNASNEAAQASIGKQWKEFLDYNDSIGFIFHEDAKKFDRHAKNKYSV.

The segment at 1–36 (MVVEETIKATSTEDLSNTIANQNPRGRGGDEDEELE) is disordered. Over residues 8 to 24 (KATSTEDLSNTIANQNP) the composition is skewed to polar residues. EIF4G-binding stretches follow at residues 60–63 (HPLE) and 70–106 (FDNPSAKSKQATWGASIRPIYTFSTVEEFWSVYNNIH). MRNA contacts are provided by residues 78 to 83 (KQATWG), lysine 110, and 128 to 129 (WE). The cysteines at positions 133 and 171 are disulfide-linked. Residues 154–163 (YTLLAMIGEQ) form an EIF4G-binding region. MRNA-binding positions include 178-183 (RSGQDK) and 223-227 (KKFDR).

This sequence belongs to the eukaryotic initiation factor 4E family. EIF4F is a multi-subunit complex, the composition of which varies with external and internal environmental conditions. It is composed of at least EIF4A, EIF4E and EIF4G. EIF4E is also known to interact with other partners. In higher plants two isoforms of EIF4F have been identified, named isoform EIF4F and isoform EIF(iso)4F. Isoform EIF4F has subunits p220 and p26, whereas isoform EIF(iso)4F has subunits p82 and p28. In terms of assembly, (Microbial infection) Interacts with potyvirus viral genome-linked protein (VPg); this interaction is possible in susceptible hosts but impaired in resistant plants. Post-translationally, according to the redox status, the Cys-133-Cys-171 disulfide bridge may have a role in regulating protein function by affecting its ability to bind capped mRNA.

Its subcellular location is the nucleus. It localises to the cytoplasm. Component of the protein complex eIF4F, which is involved in the recognition of the mRNA cap, ATP-dependent unwinding of 5'-terminal secondary structure and recruitment of mRNA to the ribosome. Recognizes and binds the 7-methylguanosine-containing mRNA cap during an early step in the initiation of protein synthesis and facilitates ribosome binding by inducing the unwinding of the mRNAs secondary structures. Key component of recessive resistance to potyviruses. Functionally, (Microbial infection) Susceptibility host factor required for viral infection by recruiting viral RNAs to the host ribosomal complex via an interaction with viral genome-linked protein (VPg). In Citrullus lanatus (Watermelon), this protein is Eukaryotic translation initiation factor 4E-1.